We begin with the raw amino-acid sequence, 309 residues long: Porphobilinogen deaminase (309 aa).

An S-(dipyrrolylmethanemethyl)cysteine modification is found at Cys-243.

This sequence belongs to the HMBS family. In terms of assembly, monomer. Dipyrromethane is required as a cofactor.

The catalysed reaction is 4 porphobilinogen + H2O = hydroxymethylbilane + 4 NH4(+). It functions in the pathway porphyrin-containing compound metabolism; protoporphyrin-IX biosynthesis; coproporphyrinogen-III from 5-aminolevulinate: step 2/4. Its function is as follows. Tetrapolymerization of the monopyrrole PBG into the hydroxymethylbilane pre-uroporphyrinogen in several discrete steps. This chain is Porphobilinogen deaminase, found in Deinococcus geothermalis (strain DSM 11300 / CIP 105573 / AG-3a).